The sequence spans 592 residues: Probable 6-phosphofructo-2-kinase C222.13c (592 aa).

The interval 1-80 is disordered; that stretch reads MSNTGSARTE…PANDVEKMEV (80 aa). Over residues 57–66 the composition is skewed to basic and acidic residues; it reads SIFKREELTP. 150-157 provides a ligand contact to ATP; the sequence is GIPATGKS. Active-site residues include Asp235 and Cys266. Arg300 is a binding site for beta-D-fructose 6-phosphate. The active-site Proton donor is the His527.

It localises to the cytoplasm. Its subcellular location is the nucleus. The catalysed reaction is beta-D-fructose 6-phosphate + ATP = beta-D-fructose 2,6-bisphosphate + ADP + H(+). Its function is as follows. Synthesis of fructose 2,6-bisphosphate. This Schizosaccharomyces pombe (strain 972 / ATCC 24843) (Fission yeast) protein is Probable 6-phosphofructo-2-kinase C222.13c.